A 1592-amino-acid chain; its full sequence is Autophagy-related protein 2 (1592 aa).

The ER-targeting domain stretch occupies residues Ala2–Ile21. At Ser236 the chain carries Phosphoserine. Ser249 carries the post-translational modification Phosphoserine; by ATG1. The disordered stretch occupies residues Ala264–Asp286. The stretch at Thr1049–Asn1075 forms a coiled coil. Ser1086 carries the post-translational modification Phosphoserine; by ATG1. Positions Ala1347–Glu1373 are PAS-targeting domain.

This sequence belongs to the ATG2 family. As to quaternary structure, interacts with ATG18. Interacts with ATG9.

It localises to the preautophagosomal structure membrane. The protein localises to the endoplasmic reticulum membrane. It carries out the reaction a 1,2-diacyl-sn-glycero-3-phosphocholine(in) = a 1,2-diacyl-sn-glycero-3-phosphocholine(out). The catalysed reaction is a 1,2-diacyl-sn-glycero-3-phospho-L-serine(in) = a 1,2-diacyl-sn-glycero-3-phospho-L-serine(out). The enzyme catalyses a 1,2-diacyl-sn-glycero-3-phosphoethanolamine(in) = a 1,2-diacyl-sn-glycero-3-phosphoethanolamine(out). Functionally, lipid transfer protein required for autophagosome completion and peroxisome degradation. Tethers the edge of the isolation membrane (IM) to the endoplasmic reticulum (ER) and mediates direct lipid transfer from ER to IM for IM expansion. ATG2 binds to the ER exit site (ERES), which is the membrane source for autophagosome formation, using basic residues in its N-terminal region (NR) and to the expanding edge of the IM through its C-terminal region. The latter binding is assisted by an ATG18-PtdIns3P interaction. ATG2 then extracts phospholipids from the membrane source using its NR and transfers them to ATG9 to the IM through its predicted beta-sheet-rich structure for membrane expansion. ATG2 is also involved in the recruitment of lipids to a restricted region close to the vacuole, termed the vacuole-isolation membrane contact site (VICS), which is also essential for autophagosome formation. Necessary for the localization of ATG18 to the preautophagosomal structure (PAS) and the binding of ATG18 to ATG9. ATG2 is the most downstream ATG protein in the preautophagosomal structure organization process. Involved in correct ATG9 trafficking through the preautophagosomal structure and in peroxisome degradation. Plays a significant role in life span extension. In Saccharomyces cerevisiae (strain ATCC 204508 / S288c) (Baker's yeast), this protein is Autophagy-related protein 2 (ATG2).